A 292-amino-acid chain; its full sequence is 4-hydroxy-tetrahydrodipicolinate synthase (292 aa).

Thr45 lines the pyruvate pocket. The active-site Proton donor/acceptor is Tyr133. Lys161 serves as the catalytic Schiff-base intermediate with substrate. A pyruvate-binding site is contributed by Ile203.

The protein belongs to the DapA family. Homotetramer; dimer of dimers.

It is found in the cytoplasm. The enzyme catalyses L-aspartate 4-semialdehyde + pyruvate = (2S,4S)-4-hydroxy-2,3,4,5-tetrahydrodipicolinate + H2O + H(+). It functions in the pathway amino-acid biosynthesis; L-lysine biosynthesis via DAP pathway; (S)-tetrahydrodipicolinate from L-aspartate: step 3/4. In terms of biological role, catalyzes the condensation of (S)-aspartate-beta-semialdehyde [(S)-ASA] and pyruvate to 4-hydroxy-tetrahydrodipicolinate (HTPA). This chain is 4-hydroxy-tetrahydrodipicolinate synthase, found in Nitrosococcus oceani (strain ATCC 19707 / BCRC 17464 / JCM 30415 / NCIMB 11848 / C-107).